Reading from the N-terminus, the 236-residue chain is Uridylate kinase (236 aa).

9 to 12 (KFSG) contacts ATP. Residues 17–22 (GNSGFG) are involved in allosteric activation by GTP. UMP is bound at residue Gly-51. ATP is bound by residues Gly-52 and Arg-56. Residues Asp-72 and 133–140 (TGNPFFTT) each bind UMP. 3 residues coordinate ATP: Thr-160, Tyr-166, and Asp-169.

It belongs to the UMP kinase family. As to quaternary structure, homohexamer.

It localises to the cytoplasm. It carries out the reaction UMP + ATP = UDP + ADP. The protein operates within pyrimidine metabolism; CTP biosynthesis via de novo pathway; UDP from UMP (UMPK route): step 1/1. Its activity is regulated as follows. Allosterically activated by GTP. Inhibited by UTP. Its function is as follows. Catalyzes the reversible phosphorylation of UMP to UDP. This is Uridylate kinase from Helicobacter hepaticus (strain ATCC 51449 / 3B1).